The sequence spans 85 residues: Putative membrane protein insertion efficiency factor (85 aa).

Belongs to the UPF0161 family.

It is found in the cell membrane. Could be involved in insertion of integral membrane proteins into the membrane. In Leifsonia xyli subsp. xyli (strain CTCB07), this protein is Putative membrane protein insertion efficiency factor.